A 1316-amino-acid chain; its full sequence is DNA-directed RNA polymerase subunit beta' (1316 aa).

The Zn(2+) site is built by C60, C62, C75, and C78. Residues D535, D537, and D539 each contribute to the Mg(2+) site. Positions 891, 968, 975, and 978 each coordinate Zn(2+).

The protein belongs to the RNA polymerase beta' chain family. The RNAP catalytic core consists of 2 alpha, 1 beta, 1 beta' and 1 omega subunit. When a sigma factor is associated with the core the holoenzyme is formed, which can initiate transcription. Mg(2+) is required as a cofactor. It depends on Zn(2+) as a cofactor.

It catalyses the reaction RNA(n) + a ribonucleoside 5'-triphosphate = RNA(n+1) + diphosphate. Its function is as follows. DNA-dependent RNA polymerase catalyzes the transcription of DNA into RNA using the four ribonucleoside triphosphates as substrates. This is DNA-directed RNA polymerase subunit beta' from Mycobacterium marinum (strain ATCC BAA-535 / M).